The following is a 385-amino-acid chain: Chaperone protein DnaJ (385 aa).

The 68-residue stretch at 5–72 (DYYEVLGVGK…QKRAAYDQFG (68 aa)) folds into the J domain. Positions 26–48 (RKLAMKHHPDRNQGDGAKASEEK) are disordered. The segment covering 35–48 (DRNQGDGAKASEEK) has biased composition (basic and acidic residues). The CR-type zinc finger occupies 145–223 (GKESQIRIPT…CNGAGKVKKQ (79 aa)). Zn(2+) contacts are provided by C158, C161, C175, C178, C197, C200, C211, and C214. CXXCXGXG motif repeat units lie at residues 158-165 (CDTCHGSG), 175-182 (CTTCHGAG), 197-204 (CPHCHGSG), and 211-218 (CTSCNGAG). The interval 362–385 (FRKGGDKHSPTSKSWTDRVKDLFK) is disordered.

Belongs to the DnaJ family. As to quaternary structure, homodimer. It depends on Zn(2+) as a cofactor.

The protein localises to the cytoplasm. Functionally, participates actively in the response to hyperosmotic and heat shock by preventing the aggregation of stress-denatured proteins and by disaggregating proteins, also in an autonomous, DnaK-independent fashion. Unfolded proteins bind initially to DnaJ; upon interaction with the DnaJ-bound protein, DnaK hydrolyzes its bound ATP, resulting in the formation of a stable complex. GrpE releases ADP from DnaK; ATP binding to DnaK triggers the release of the substrate protein, thus completing the reaction cycle. Several rounds of ATP-dependent interactions between DnaJ, DnaK and GrpE are required for fully efficient folding. Also involved, together with DnaK and GrpE, in the DNA replication of plasmids through activation of initiation proteins. This is Chaperone protein DnaJ from Leptothrix cholodnii (strain ATCC 51168 / LMG 8142 / SP-6) (Leptothrix discophora (strain SP-6)).